The following is a 628-amino-acid chain: Kinesin-like protein KIN-10B (628 aa).

A Kinesin motor domain is found at 20-340 (NVRVVLRVRP…VSLAARSRHI (321 aa)). ATP is bound at residue 114 to 121 (GATGSGKT). The disordered stretch occupies residues 496 to 519 (SPIDSNAKPNSAHGSSPFLKPMTP). Positions 498–509 (IDSNAKPNSAHG) are enriched in polar residues.

The protein belongs to the TRAFAC class myosin-kinesin ATPase superfamily. Kinesin family. KIN-10 subfamily.

In Arabidopsis thaliana (Mouse-ear cress), this protein is Kinesin-like protein KIN-10B.